The following is a 202-amino-acid chain: Imidazole glycerol phosphate synthase subunit HisH (202 aa).

Positions 3–202 (RIVIIDYGLG…KILKNFVEMC (200 aa)) constitute a Glutamine amidotransferase type-1 domain. Cys79 (nucleophile) is an active-site residue. Catalysis depends on residues His183 and Glu185.

As to quaternary structure, heterodimer of HisH and HisF.

It is found in the cytoplasm. The enzyme catalyses 5-[(5-phospho-1-deoxy-D-ribulos-1-ylimino)methylamino]-1-(5-phospho-beta-D-ribosyl)imidazole-4-carboxamide + L-glutamine = D-erythro-1-(imidazol-4-yl)glycerol 3-phosphate + 5-amino-1-(5-phospho-beta-D-ribosyl)imidazole-4-carboxamide + L-glutamate + H(+). The catalysed reaction is L-glutamine + H2O = L-glutamate + NH4(+). It participates in amino-acid biosynthesis; L-histidine biosynthesis; L-histidine from 5-phospho-alpha-D-ribose 1-diphosphate: step 5/9. Its function is as follows. IGPS catalyzes the conversion of PRFAR and glutamine to IGP, AICAR and glutamate. The HisH subunit catalyzes the hydrolysis of glutamine to glutamate and ammonia as part of the synthesis of IGP and AICAR. The resulting ammonia molecule is channeled to the active site of HisF. The protein is Imidazole glycerol phosphate synthase subunit HisH of Methanosarcina acetivorans (strain ATCC 35395 / DSM 2834 / JCM 12185 / C2A).